The chain runs to 297 residues: MIPLSIRVPASTANVGPGFDSVGIALSLYLHVVVKEKSDKWQVIHSFEDSIPTDDKNLIVSTACKVCPSLSPHIIEVTSNIPLTRGLGSSASAIVAGIELANQLGKLNLTIDQKVQIATNFEGHPDNVAASILGGTVIGALDGKNVSVVRIESKELGVISLIPNEELNTDESRSVLPDVFPFHEAVKASAISNVLVAALCQKKWKVVGEMMERDHFHEPYRLELVPLLPSIRKCAKEFGAYGTALSGAGPSIFILTPYEKRQEIAEQLARVFTSMKVCELEIDHRGITVNKKEHIGL.

82-92 (PLTRGLGSSAS) is an ATP binding site.

The protein belongs to the GHMP kinase family. Homoserine kinase subfamily.

It localises to the cytoplasm. It carries out the reaction L-homoserine + ATP = O-phospho-L-homoserine + ADP + H(+). It functions in the pathway amino-acid biosynthesis; L-threonine biosynthesis; L-threonine from L-aspartate: step 4/5. In terms of biological role, catalyzes the ATP-dependent phosphorylation of L-homoserine to L-homoserine phosphate. The polypeptide is Homoserine kinase (Bacillus anthracis (strain CDC 684 / NRRL 3495)).